A 314-amino-acid chain; its full sequence is 4-hydroxy-3-methylbut-2-enyl diphosphate reductase (314 aa).

Cys-12 is a binding site for [4Fe-4S] cluster. Positions 41 and 74 each coordinate (2E)-4-hydroxy-3-methylbut-2-enyl diphosphate. Residues His-41 and His-74 each coordinate dimethylallyl diphosphate. Isopentenyl diphosphate-binding residues include His-41 and His-74. A [4Fe-4S] cluster-binding site is contributed by Cys-96. Residue His-124 coordinates (2E)-4-hydroxy-3-methylbut-2-enyl diphosphate. Residue His-124 coordinates dimethylallyl diphosphate. His-124 is an isopentenyl diphosphate binding site. Glu-126 functions as the Proton donor in the catalytic mechanism. Thr-167 lines the (2E)-4-hydroxy-3-methylbut-2-enyl diphosphate pocket. Cys-197 contributes to the [4Fe-4S] cluster binding site. The (2E)-4-hydroxy-3-methylbut-2-enyl diphosphate site is built by Ser-225, Ser-226, Asn-227, and Ser-269. Dimethylallyl diphosphate contacts are provided by Ser-225, Ser-226, Asn-227, and Ser-269. Positions 225, 226, 227, and 269 each coordinate isopentenyl diphosphate.

Belongs to the IspH family. [4Fe-4S] cluster serves as cofactor.

It carries out the reaction isopentenyl diphosphate + 2 oxidized [2Fe-2S]-[ferredoxin] + H2O = (2E)-4-hydroxy-3-methylbut-2-enyl diphosphate + 2 reduced [2Fe-2S]-[ferredoxin] + 2 H(+). The enzyme catalyses dimethylallyl diphosphate + 2 oxidized [2Fe-2S]-[ferredoxin] + H2O = (2E)-4-hydroxy-3-methylbut-2-enyl diphosphate + 2 reduced [2Fe-2S]-[ferredoxin] + 2 H(+). Its pathway is isoprenoid biosynthesis; dimethylallyl diphosphate biosynthesis; dimethylallyl diphosphate from (2E)-4-hydroxy-3-methylbutenyl diphosphate: step 1/1. It functions in the pathway isoprenoid biosynthesis; isopentenyl diphosphate biosynthesis via DXP pathway; isopentenyl diphosphate from 1-deoxy-D-xylulose 5-phosphate: step 6/6. Its function is as follows. Catalyzes the conversion of 1-hydroxy-2-methyl-2-(E)-butenyl 4-diphosphate (HMBPP) into a mixture of isopentenyl diphosphate (IPP) and dimethylallyl diphosphate (DMAPP). Acts in the terminal step of the DOXP/MEP pathway for isoprenoid precursor biosynthesis. In Aliivibrio salmonicida (strain LFI1238) (Vibrio salmonicida (strain LFI1238)), this protein is 4-hydroxy-3-methylbut-2-enyl diphosphate reductase.